Here is a 697-residue protein sequence, read N- to C-terminus: Transmembrane protein 168 (697 aa).

A run of 3 helical transmembrane segments spans residues 36–56 (LGYLARINLLVAICLGLYVRW), 63–83 (LILVIFILGLFVLGIASILYY), and 89–109 (AASLSLSNLWFGFLLGLLCFL). Asn-111 carries an N-linked (GlcNAc...) asparagine glycan. The next 5 helical transmembrane spans lie at 172–192 (MLVEKSLSVILLVMALAMLII), 199–219 (FLAIPNLIIFSVLLFFSSLET), 223–243 (PIAFACFFICLVTDPFLDIYF), 265–285 (LSVLFTAMIELTFFILSAFKL), and 293–313 (FVIPGFSIFGFFWMICHIIFL). Asn-337 carries an N-linked (GlcNAc...) asparagine glycan. 2 helical membrane passes run 352–372 (FCLISEQLVFFSLLATAILGA) and 380–400 (GIFLSMFLIVLPLESMAHGLF). Asn-533 and Asn-598 each carry an N-linked (GlcNAc...) asparagine glycan.

Belongs to the TMEM168 family.

It is found in the nucleus membrane. Its function is as follows. Plays a key role in maintaining the cardiac electrical stability by modulating cell surface expression of SCN5A. Plays a role i the modulation of anxiety behavior by regulating GABAergic neuronal system in the nucleus accumbens. The protein is Transmembrane protein 168 (Tmem168) of Mus musculus (Mouse).